The chain runs to 274 residues: Large ribosomal subunit protein uL2 (274 aa).

Residues 223 to 257 (VAMNPVDHPHGGGEGRTSGGRHPVTPWGIPTKGYK) form a disordered region.

Belongs to the universal ribosomal protein uL2 family. As to quaternary structure, part of the 50S ribosomal subunit. Forms a bridge to the 30S subunit in the 70S ribosome.

One of the primary rRNA binding proteins. Required for association of the 30S and 50S subunits to form the 70S ribosome, for tRNA binding and peptide bond formation. It has been suggested to have peptidyltransferase activity; this is somewhat controversial. Makes several contacts with the 16S rRNA in the 70S ribosome. This chain is Large ribosomal subunit protein uL2, found in Geobacter sulfurreducens (strain ATCC 51573 / DSM 12127 / PCA).